The following is a 569-amino-acid chain: DNA-binding protein eta2 (569 aa).

Disordered stretches follow at residues 1 to 26 and 133 to 159; these read MMLA…TLSC and KRKI…AKKR. The segment covering 9-26 has biased composition (polar residues); the sequence is INENQGTRSNLESPTLSC. At serine 21 the chain carries Phosphoserine. Myb-like domains follow at residues 322 to 371 and 377 to 459; these read LDPK…RFVV and ETID…EKTI. The interval 459–487 is disordered; that stretch reads IASYSSNQRQEEDQGKKRKKRKKKKSKGK. Residues 474 to 487 are compositionally biased toward basic residues; the sequence is KKRKKRKKKKSKGK.

The protein resides in the nucleus. The polypeptide is DNA-binding protein eta2 (eta2) (Schizosaccharomyces pombe (strain 972 / ATCC 24843) (Fission yeast)).